The sequence spans 599 residues: Elongation factor 4 (599 aa).

A tr-type G domain is found at 5–187; sequence SHIRNFSIIA…ALVNGIPAPV (183 aa). GTP contacts are provided by residues 17–22 and 134–137; these read DHGKST and NKMD.

The protein belongs to the TRAFAC class translation factor GTPase superfamily. Classic translation factor GTPase family. LepA subfamily.

It is found in the cell inner membrane. The enzyme catalyses GTP + H2O = GDP + phosphate + H(+). Required for accurate and efficient protein synthesis under certain stress conditions. May act as a fidelity factor of the translation reaction, by catalyzing a one-codon backward translocation of tRNAs on improperly translocated ribosomes. Back-translocation proceeds from a post-translocation (POST) complex to a pre-translocation (PRE) complex, thus giving elongation factor G a second chance to translocate the tRNAs correctly. Binds to ribosomes in a GTP-dependent manner. This chain is Elongation factor 4, found in Teredinibacter turnerae (strain ATCC 39867 / T7901).